We begin with the raw amino-acid sequence, 192 residues long: Pyridoxal 5'-phosphate synthase subunit PdxT (192 aa).

46–48 (GES) contacts L-glutamine. Residue cysteine 77 is the Nucleophile of the active site. L-glutamine is bound by residues arginine 103 and 131–132 (IR). Active-site charge relay system residues include histidine 167 and glutamate 169.

Belongs to the glutaminase PdxT/SNO family. As to quaternary structure, in the presence of PdxS, forms a dodecamer of heterodimers. Only shows activity in the heterodimer.

It carries out the reaction aldehydo-D-ribose 5-phosphate + D-glyceraldehyde 3-phosphate + L-glutamine = pyridoxal 5'-phosphate + L-glutamate + phosphate + 3 H2O + H(+). The catalysed reaction is L-glutamine + H2O = L-glutamate + NH4(+). The protein operates within cofactor biosynthesis; pyridoxal 5'-phosphate biosynthesis. Catalyzes the hydrolysis of glutamine to glutamate and ammonia as part of the biosynthesis of pyridoxal 5'-phosphate. The resulting ammonia molecule is channeled to the active site of PdxS. The protein is Pyridoxal 5'-phosphate synthase subunit PdxT of Exiguobacterium sibiricum (strain DSM 17290 / CCUG 55495 / CIP 109462 / JCM 13490 / 255-15).